The chain runs to 530 residues: UDP-glucuronosyltransferase 2A3 (530 aa).

The signal sequence occupies residues 1–23 (MAPGKLASAVLLLLLCCAGSGFC). Residues 24–494 (GKVLVWPCEM…SWFQYHSLDV (471 aa)) lie on the Extracellular side of the membrane. Residue N316 is glycosylated (N-linked (GlcNAc...) asparagine). The helical transmembrane segment at 495 to 515 (IGFLLACVASAILLVTKCCLF) threads the bilayer. At 516 to 530 (SFQNFIKIGKRIKKE) the chain is on the cytoplasmic side.

Belongs to the UDP-glycosyltransferase family. In terms of tissue distribution, specifically expressed in liver and small intestine.

Its subcellular location is the membrane. The catalysed reaction is glucuronate acceptor + UDP-alpha-D-glucuronate = acceptor beta-D-glucuronoside + UDP + H(+). UDP-glucuronosyltransferases catalyze phase II biotransformation reactions in which lipophilic substrates are conjugated with glucuronic acid to increase water solubility and enhance excretion. They are of major importance in the conjugation and subsequent elimination of potentially toxic xenobiotics and endogenous compounds. This Cavia porcellus (Guinea pig) protein is UDP-glucuronosyltransferase 2A3 (UGT2A3).